The following is a 555-amino-acid chain: Glutamine--tRNA ligase (555 aa).

Residues 34–44 (PEPNGYLHIGH) carry the 'HIGH' region motif. Residues 35 to 37 (EPN) and 41 to 47 (HIGHAKS) contribute to the ATP site. The L-glutamine site is built by Asp67 and Tyr212. ATP-binding positions include Thr231, 261–262 (RL), and 269–271 (MSK). The short motif at 268–272 (VMSKR) is the 'KMSKS' region element. The segment at 317–324 (TKQDNTIE) is interaction with tRNA.

It belongs to the class-I aminoacyl-tRNA synthetase family. In terms of assembly, monomer.

It is found in the cytoplasm. The enzyme catalyses tRNA(Gln) + L-glutamine + ATP = L-glutaminyl-tRNA(Gln) + AMP + diphosphate. In Salmonella choleraesuis (strain SC-B67), this protein is Glutamine--tRNA ligase.